Consider the following 100-residue polypeptide: NADH-quinone oxidoreductase subunit K (100 aa).

3 helical membrane-spanning segments follow: residues 2–22 (IGLS…LMGV), 29–49 (LMLF…FAAI), and 63–83 (FFII…LIVL).

This sequence belongs to the complex I subunit 4L family. In terms of assembly, NDH-1 is composed of 14 different subunits. Subunits NuoA, H, J, K, L, M, N constitute the membrane sector of the complex.

The protein localises to the cell inner membrane. The enzyme catalyses a quinone + NADH + 5 H(+)(in) = a quinol + NAD(+) + 4 H(+)(out). Its function is as follows. NDH-1 shuttles electrons from NADH, via FMN and iron-sulfur (Fe-S) centers, to quinones in the respiratory chain. The immediate electron acceptor for the enzyme in this species is believed to be ubiquinone. Couples the redox reaction to proton translocation (for every two electrons transferred, four hydrogen ions are translocated across the cytoplasmic membrane), and thus conserves the redox energy in a proton gradient. The polypeptide is NADH-quinone oxidoreductase subunit K (Sulfurovum sp. (strain NBC37-1)).